Reading from the N-terminus, the 459-residue chain is F-box protein At1g47340 (459 aa).

The F-box domain occupies 31 to 76 (FMVSVSLPKELILEILKRLPAKSVKRFHCVSKQWASMLSCPHFREL). Residues 434 to 459 (AKIEWEEEEEEDEDEDQEKEEEDQWS) form a disordered region. Residues 438 to 459 (WEEEEEEDEDEDQEKEEEDQWS) show a composition bias toward acidic residues.

The protein is F-box protein At1g47340 of Arabidopsis thaliana (Mouse-ear cress).